A 196-amino-acid polypeptide reads, in one-letter code: MAKGPRYKVPRRRRREGKTNYYKRYRMIVSGHPRFIVRKTLNYIWVQVATARPEGDVIIAAAHSNELRKRFGWKAGTCNTSAAYLTGLLAALRALEKGVEYAVPDIGLHRPVKGALVFAAIKAANDAGLKVPMGGEVAPSEERIRGEHIASYAKILRENGLLEKRFSRYLANGLQPEDLPSHFEEVKNKILEAYKR.

It belongs to the universal ribosomal protein uL18 family. In terms of assembly, part of the 50S ribosomal subunit. Contacts the 5S and 23S rRNAs.

Functionally, this is one of the proteins that bind and probably mediate the attachment of the 5S RNA into the large ribosomal subunit, where it forms part of the central protuberance. This Desulfurococcus amylolyticus (strain DSM 18924 / JCM 16383 / VKM B-2413 / 1221n) (Desulfurococcus kamchatkensis) protein is Large ribosomal subunit protein uL18.